Reading from the N-terminus, the 366-residue chain is Chorismate synthase (366 aa).

Residues Arg48 and Arg54 each coordinate NADP(+). Residues 125–127 (RSS), 242–243 (NA), Gly287, 302–306 (KPTSS), and Arg328 contribute to the FMN site.

The protein belongs to the chorismate synthase family. Homotetramer. FMNH2 is required as a cofactor.

It catalyses the reaction 5-O-(1-carboxyvinyl)-3-phosphoshikimate = chorismate + phosphate. It participates in metabolic intermediate biosynthesis; chorismate biosynthesis; chorismate from D-erythrose 4-phosphate and phosphoenolpyruvate: step 7/7. Its function is as follows. Catalyzes the anti-1,4-elimination of the C-3 phosphate and the C-6 proR hydrogen from 5-enolpyruvylshikimate-3-phosphate (EPSP) to yield chorismate, which is the branch point compound that serves as the starting substrate for the three terminal pathways of aromatic amino acid biosynthesis. This reaction introduces a second double bond into the aromatic ring system. This is Chorismate synthase from Rhodospirillum rubrum (strain ATCC 11170 / ATH 1.1.1 / DSM 467 / LMG 4362 / NCIMB 8255 / S1).